We begin with the raw amino-acid sequence, 165 residues long: Bacterial non-heme ferritin (165 aa).

The Ferritin-like diiron domain maps to 1–145; the sequence is MLKPEMIEKL…SIIDKLSLAG (145 aa). Fe cation is bound by residues glutamate 17, glutamate 49, glutamate 50, histidine 53, glutamate 94, glutamate 126, glutamine 127, and glutamate 130.

The protein belongs to the ferritin family. Prokaryotic subfamily. In terms of assembly, homooligomer of 24 subunits that assemble into a spherical protein shell (12 +/- 1 nM diameter) that can sequester at least 2000 iron atoms.

Its subcellular location is the cytoplasm. The catalysed reaction is 4 Fe(2+) + O2 + 6 H2O = 4 iron(III) oxide-hydroxide + 12 H(+). Iron-storage protein. The chain is Bacterial non-heme ferritin (ftnA) from Escherichia coli O157:H7.